The sequence spans 476 residues: Adenosylhomocysteinase (476 aa).

Substrate-binding residues include Thr-67, Asp-142, and Glu-202. 203–205 (TTT) contacts NAD(+). The substrate site is built by Lys-232 and Asp-236. NAD(+) contacts are provided by residues Asn-237, 266–271 (GYGDVG), Glu-289, Asn-324, 345–347 (IGH), and Asn-390.

This sequence belongs to the adenosylhomocysteinase family. It depends on NAD(+) as a cofactor.

It is found in the cytoplasm. It catalyses the reaction S-adenosyl-L-homocysteine + H2O = L-homocysteine + adenosine. It functions in the pathway amino-acid biosynthesis; L-homocysteine biosynthesis; L-homocysteine from S-adenosyl-L-homocysteine: step 1/1. Its function is as follows. May play a key role in the regulation of the intracellular concentration of adenosylhomocysteine. This is Adenosylhomocysteinase from Prochlorococcus marinus (strain SARG / CCMP1375 / SS120).